The sequence spans 582 residues: ATP-dependent lipid A-core flippase (582 aa).

5 helical membrane passes run 16-36 (LWPMISPFKAGLAVAAIALII), 63-83 (VLLWMPLVVIGLMLVRGASGF), 153-173 (IIGLFILMFYYSWQLSIILIV), 253-273 (PIIQLIASLALAFVLYAASFP), and 275-295 (VMETLTAGTITVVFSSMIALM). The ABC transmembrane type-1 domain occupies 28 to 310 (AVAAIALIIN…LTNVNAQFQR (283 aa)). The region spanning 342-578 (LEFRQVNFAY…NGAYAQLHRM (237 aa)) is the ABC transporter domain. Residue 376-383 (GRSGSGKS) participates in ATP binding.

It belongs to the ABC transporter superfamily. Lipid exporter (TC 3.A.1.106) family. As to quaternary structure, homodimer.

The protein localises to the cell inner membrane. The enzyme catalyses ATP + H2O + lipid A-core oligosaccharideSide 1 = ADP + phosphate + lipid A-core oligosaccharideSide 2.. In terms of biological role, involved in lipopolysaccharide (LPS) biosynthesis. Translocates lipid A-core from the inner to the outer leaflet of the inner membrane. Transmembrane domains (TMD) form a pore in the inner membrane and the ATP-binding domain (NBD) is responsible for energy generation. This is ATP-dependent lipid A-core flippase from Pectobacterium atrosepticum (strain SCRI 1043 / ATCC BAA-672) (Erwinia carotovora subsp. atroseptica).